The sequence spans 356 residues: uncharacterized protein (356 aa).

This is an uncharacterized protein from Bacillus subtilis (strain 168).